Reading from the N-terminus, the 246-residue chain is 3-deoxy-manno-octulosonate cytidylyltransferase (246 aa).

Belongs to the KdsB family.

Its subcellular location is the cytoplasm. The catalysed reaction is 3-deoxy-alpha-D-manno-oct-2-ulosonate + CTP = CMP-3-deoxy-beta-D-manno-octulosonate + diphosphate. It participates in nucleotide-sugar biosynthesis; CMP-3-deoxy-D-manno-octulosonate biosynthesis; CMP-3-deoxy-D-manno-octulosonate from 3-deoxy-D-manno-octulosonate and CTP: step 1/1. It functions in the pathway bacterial outer membrane biogenesis; lipopolysaccharide biosynthesis. Activates KDO (a required 8-carbon sugar) for incorporation into bacterial lipopolysaccharide in Gram-negative bacteria. In Bradyrhizobium sp. (strain BTAi1 / ATCC BAA-1182), this protein is 3-deoxy-manno-octulosonate cytidylyltransferase.